The primary structure comprises 439 residues: GTPase Der (439 aa).

EngA-type G domains follow at residues 4-168 (PIVA…KDDE) and 177-352 (INIA…DNYT). GTP-binding positions include 10 to 17 (GRPNVGKS), 57 to 61 (DTGGI), 120 to 123 (NKID), 183 to 190 (GKPNVGKS), 230 to 234 (DTAGL), and 295 to 298 (NKWD). A KH-like domain is found at 353 to 437 (KRVKTGVLND…GIKLEFRERK (85 aa)).

This sequence belongs to the TRAFAC class TrmE-Era-EngA-EngB-Septin-like GTPase superfamily. EngA (Der) GTPase family. In terms of assembly, associates with the 50S ribosomal subunit.

Functionally, GTPase that plays an essential role in the late steps of ribosome biogenesis. The polypeptide is GTPase Der (Clostridium botulinum (strain Okra / Type B1)).